The primary structure comprises 453 residues: Probable acetylornithine aminotransferase, mitochondrial (453 aa).

The residue at position 302 (Lys302) is an N6-(pyridoxal phosphate)lysine.

It belongs to the class-III pyridoxal-phosphate-dependent aminotransferase family. Pyridoxal 5'-phosphate serves as cofactor.

It is found in the mitochondrion matrix. It catalyses the reaction N(2)-acetyl-L-ornithine + 2-oxoglutarate = N-acetyl-L-glutamate 5-semialdehyde + L-glutamate. The protein operates within amino-acid biosynthesis; L-arginine biosynthesis; N(2)-acetyl-L-ornithine from L-glutamate: step 4/4. The polypeptide is Probable acetylornithine aminotransferase, mitochondrial (argD) (Dictyostelium discoideum (Social amoeba)).